The primary structure comprises 74 residues: ATP synthase subunit c (74 aa).

A run of 2 helical transmembrane segments spans residues 8 to 28 (FIGA…VGNI) and 52 to 72 (IGFA…LMVL).

Belongs to the ATPase C chain family. In terms of assembly, F-type ATPases have 2 components, F(1) - the catalytic core - and F(0) - the membrane proton channel. F(1) has five subunits: alpha(3), beta(3), gamma(1), delta(1), epsilon(1). F(0) has three main subunits: a(1), b(2) and c(10-14). The alpha and beta chains form an alternating ring which encloses part of the gamma chain. F(1) is attached to F(0) by a central stalk formed by the gamma and epsilon chains, while a peripheral stalk is formed by the delta and b chains.

It localises to the cell inner membrane. Its function is as follows. F(1)F(0) ATP synthase produces ATP from ADP in the presence of a proton or sodium gradient. F-type ATPases consist of two structural domains, F(1) containing the extramembraneous catalytic core and F(0) containing the membrane proton channel, linked together by a central stalk and a peripheral stalk. During catalysis, ATP synthesis in the catalytic domain of F(1) is coupled via a rotary mechanism of the central stalk subunits to proton translocation. Key component of the F(0) channel; it plays a direct role in translocation across the membrane. A homomeric c-ring of between 10-14 subunits forms the central stalk rotor element with the F(1) delta and epsilon subunits. This is ATP synthase subunit c from Paramagnetospirillum magneticum (strain ATCC 700264 / AMB-1) (Magnetospirillum magneticum).